We begin with the raw amino-acid sequence, 207 residues long: LPS-assembly lipoprotein LptE (207 aa).

A signal peptide spans 1–19 (MRHRILTLLLGLAVLVTAG). Residue C20 is the site of N-palmitoyl cysteine attachment. C20 is lipidated: S-diacylglycerol cysteine. The tract at residues 168–207 (KNTQKNGDKPVSDANAAQGSTPTAVNETTLGEPAVSTSAK) is disordered. Polar residues predominate over residues 182-207 (NAAQGSTPTAVNETTLGEPAVSTSAK).

It belongs to the LptE lipoprotein family. In terms of assembly, component of the lipopolysaccharide transport and assembly complex. Interacts with LptD.

It localises to the cell outer membrane. Functionally, together with LptD, is involved in the assembly of lipopolysaccharide (LPS) at the surface of the outer membrane. Required for the proper assembly of LptD. Binds LPS and may serve as the LPS recognition site at the outer membrane. This is LPS-assembly lipoprotein LptE from Yersinia pseudotuberculosis serotype O:1b (strain IP 31758).